The following is a 204-amino-acid chain: Imidazole glycerol phosphate synthase subunit HisH 1 (204 aa).

The 200-residue stretch at K5–L204 folds into the Glutamine amidotransferase type-1 domain. Residue C80 is the Nucleophile of the active site. Residues H186 and E188 contribute to the active site.

In terms of assembly, heterodimer of HisH and HisF.

The protein resides in the cytoplasm. The catalysed reaction is 5-[(5-phospho-1-deoxy-D-ribulos-1-ylimino)methylamino]-1-(5-phospho-beta-D-ribosyl)imidazole-4-carboxamide + L-glutamine = D-erythro-1-(imidazol-4-yl)glycerol 3-phosphate + 5-amino-1-(5-phospho-beta-D-ribosyl)imidazole-4-carboxamide + L-glutamate + H(+). It carries out the reaction L-glutamine + H2O = L-glutamate + NH4(+). It participates in amino-acid biosynthesis; L-histidine biosynthesis; L-histidine from 5-phospho-alpha-D-ribose 1-diphosphate: step 5/9. Functionally, IGPS catalyzes the conversion of PRFAR and glutamine to IGP, AICAR and glutamate. The HisH subunit provides the glutamine amidotransferase activity that produces the ammonia necessary to HisF for the synthesis of IGP and AICAR. The polypeptide is Imidazole glycerol phosphate synthase subunit HisH 1 (hisH1) (Vibrio vulnificus (strain YJ016)).